Here is a 197-residue protein sequence, read N- to C-terminus: Phospholipid hydroperoxide glutathione peroxidase (197 aa).

Serine 40 is subject to Phosphoserine. Selenocysteine 73 is a catalytic residue. Residue selenocysteine 73 is a non-standard amino acid, selenocysteine.

This sequence belongs to the glutathione peroxidase family. In terms of assembly, monomer. Has a tendency to form higher mass oligomers. Interacts with FUNDC1; this interaction promotes GPX4 recruitment into mitochondria through TOM/TIM complex where it is degraded by mitophagy. Expressed in testis. Also expressed in liver, lung, kidney and spinal cord.

The protein resides in the mitochondrion. It is found in the cytoplasm. It catalyses the reaction a hydroperoxy polyunsaturated fatty acid + 2 glutathione = a hydroxy polyunsaturated fatty acid + glutathione disulfide + H2O. The catalysed reaction is 2 glutathione + H2O2 = glutathione disulfide + 2 H2O. It carries out the reaction tert-butyl hydroperoxide + 2 glutathione = tert-butanol + glutathione disulfide + H2O. The enzyme catalyses cumene hydroperoxide + 2 glutathione = 2-phenylpropan-2-ol + glutathione disulfide + H2O. It catalyses the reaction (9S)-hydroperoxy-(10E,12Z)-octadecadienoate + 2 glutathione = (9S)-hydroxy-(10E,12Z)-octadecadienoate + glutathione disulfide + H2O. The catalysed reaction is (13S)-hydroperoxy-(9Z,11E)-octadecadienoate + 2 glutathione = (13S)-hydroxy-(9Z,11E)-octadecadienoate + glutathione disulfide + H2O. It carries out the reaction (5S)-hydroperoxy-(6E,8Z,11Z,14Z)-eicosatetraenoate + 2 glutathione = (5S)-hydroxy-(6E,8Z,11Z,14Z)-eicosatetraenoate + glutathione disulfide + H2O. The enzyme catalyses (12R)-hydroperoxy-(5Z,8Z,10E,14Z)-eicosatetraenoate + 2 glutathione = (12R)-hydroxy-(5Z,8Z,10E,14Z)-eicosatetraenoate + glutathione disulfide + H2O. It catalyses the reaction (12S)-hydroperoxy-(5Z,8Z,10E,14Z)-eicosatetraenoate + 2 glutathione = (12S)-hydroxy-(5Z,8Z,10E,14Z)-eicosatetraenoate + glutathione disulfide + H2O. The catalysed reaction is (15S)-hydroperoxy-(5Z,8Z,11Z,13E)-eicosatetraenoate + 2 glutathione = (15S)-hydroxy-(5Z,8Z,11Z,13E)-eicosatetraenoate + glutathione disulfide + H2O. It carries out the reaction (5S)-hydroperoxy-(6E,8Z,11Z,14Z,17Z)-eicosapentaenoate + 2 glutathione = (5S)-hydroxy-(6E,8Z,11Z,14Z,17Z)-eicosapentaenoate + glutathione disulfide + H2O. The enzyme catalyses (12S)-hydroperoxy-(5Z,8Z,10E,14Z,17Z)-eicosapentaenoate + 2 glutathione = (12S)-hydroxy-(5Z,8Z,10E,14Z,17Z)-eicosapentaenoate + glutathione disulfide + H2O. It catalyses the reaction (15S)-hydroperoxy-(5Z,8Z,11Z,13E,17Z)-eicosapentaenoate + 2 glutathione = (15S)-hydroxy-(5Z,8Z,11Z,13E,17Z)-eicosapentaenoate + glutathione disulfide + H2O. The catalysed reaction is (15S)-hydroperoxy-(11Z,13E)-eicosadienoate + 2 glutathione = (15S)-hydroxy-(11Z,13E)-eicosadienoate + glutathione disulfide + H2O. It carries out the reaction (17S)-hydroperoxy-(4Z,7Z,10Z,13Z,15E,19Z)-docosahexaenoate + 2 glutathione = (17S)-hydroxy-(4Z,7Z,10Z,13Z,15E,19Z)-docosahexaenoate + glutathione disulfide + H2O. The enzyme catalyses a hydroperoxy-1,2-diacyl-glycero-3-phosphocholine + 2 glutathione = a hydroxy-1,2-diacyl-glycero-3-phosphocholine + glutathione disulfide + H2O. Its function is as follows. Essential antioxidant peroxidase that directly reduces phospholipid hydroperoxide even if they are incorporated in membranes and lipoproteins. Can also reduce fatty acid hydroperoxide, cholesterol hydroperoxide and thymine hydroperoxide. Plays a key role in protecting cells from oxidative damage by preventing membrane lipid peroxidation. Required to prevent cells from ferroptosis, a non-apoptotic cell death resulting from an iron-dependent accumulation of lipid reactive oxygen species. The presence of selenocysteine (Sec) versus Cys at the active site is essential for life: it provides resistance to overoxidation and prevents cells against ferroptosis. The presence of Sec at the active site is also essential for the survival of a specific type of parvalbumin-positive interneurons, thereby preventing against fatal epileptic seizures. May be required to protect cells from the toxicity of ingested lipid hydroperoxides. Required for normal sperm development and male fertility. Essential for maturation and survival of photoreceptor cells. Plays a role in a primary T-cell response to viral and parasitic infection by protecting T-cells from ferroptosis and by supporting T-cell expansion. Plays a role of glutathione peroxidase in platelets in the arachidonic acid metabolism. Reduces hydroperoxy ester lipids formed by a 15-lipoxygenase that may play a role as down-regulator of the cellular 15-lipoxygenase pathway. Can also reduce small soluble hydroperoxides such as H2O2, cumene hydroperoxide and tert-butyl hydroperoxide. The chain is Phospholipid hydroperoxide glutathione peroxidase from Callithrix jacchus (White-tufted-ear marmoset).